The chain runs to 466 residues: Argininosuccinate lyase 1 (466 aa).

It belongs to the lyase 1 family. Argininosuccinate lyase subfamily.

The protein localises to the cytoplasm. It catalyses the reaction 2-(N(omega)-L-arginino)succinate = fumarate + L-arginine. Its pathway is amino-acid biosynthesis; L-arginine biosynthesis; L-arginine from L-ornithine and carbamoyl phosphate: step 3/3. This chain is Argininosuccinate lyase 1, found in Mesorhizobium japonicum (strain LMG 29417 / CECT 9101 / MAFF 303099) (Mesorhizobium loti (strain MAFF 303099)).